The sequence spans 574 residues: Septation ring formation regulator EzrA (574 aa).

Residues 1–7 (MSNGLII) lie on the Extracellular side of the membrane. The helical transmembrane segment at 8–26 (LIIVIAVALILAYVAAVVL) threads the bilayer. Residues 27 to 574 (RKRNETLLDS…YEKTRENIRF (548 aa)) lie on the Cytoplasmic side of the membrane. Coiled coils occupy residues 104–141 (LKAK…EAKN), 267–424 (NITQ…QKVN), and 456–524 (ASDH…SIQE).

It belongs to the EzrA family.

It localises to the cell membrane. Functionally, negative regulator of FtsZ ring formation; modulates the frequency and position of FtsZ ring formation. Inhibits FtsZ ring formation at polar sites. Interacts either with FtsZ or with one of its binding partners to promote depolymerization. The chain is Septation ring formation regulator EzrA from Streptococcus gordonii (strain Challis / ATCC 35105 / BCRC 15272 / CH1 / DL1 / V288).